We begin with the raw amino-acid sequence, 106 residues long: Translation initiation factor 1A 2 (106 aa).

A disordered region spans residues 1–24 (MRKRREGTANNSPTPEVTRVRTPR). Residues 18-92 (TRVRTPRKEN…SKADVIWKYT (75 aa)) enclose the S1-like domain.

It belongs to the eIF-1A family.

Its function is as follows. Seems to be required for maximal rate of protein biosynthesis. Enhances ribosome dissociation into subunits and stabilizes the binding of the initiator Met-tRNA(I) to 40 S ribosomal subunits. This Methanosarcina mazei (strain ATCC BAA-159 / DSM 3647 / Goe1 / Go1 / JCM 11833 / OCM 88) (Methanosarcina frisia) protein is Translation initiation factor 1A 2 (eIF1A2).